The chain runs to 349 residues: Mitomycin biosynthesis 6-O-methyltransferase (349 aa).

S-adenosyl-L-methionine is bound by residues serine 167, glycine 190, 213–214 (ER), 240–241 (DF), and lysine 255. Residue histidine 259 is the Proton acceptor of the active site. Substrate is bound at residue asparagine 288.

The protein belongs to the class I-like SAM-binding methyltransferase superfamily. Cation-independent O-methyltransferase family. COMT subfamily. In terms of assembly, homodimer.

The enzyme catalyses 6-demethylmitomycin A + S-adenosyl-L-methionine = mitomycin A + S-adenosyl-L-homocysteine. It catalyses the reaction 6-demethylmitomycin B + S-adenosyl-L-methionine = mitomycin B + S-adenosyl-L-homocysteine. Its activity is regulated as follows. Completely inhibited by Zn(2+) and Cu(2+). Its function is as follows. Involved in the biosynthesis of the quinone methoxy group present in the mitomycin A and B, which are used as anticancer agents. In vitro, catalyzes the 6-O-methylation of both C9-beta- and C9-alpha-configured 6-hydroxymitomycins via the transfer of the S-methyl group of S-adenosyl-L-methionine (AdoMet) to the 6-demethylmitomycin A and B. It can also use hydroxyquinone as substrate. This chain is Mitomycin biosynthesis 6-O-methyltransferase, found in Streptomyces lavendulae.